The primary structure comprises 378 residues: MGQSKKLNKQPRSLSPLVLLSGISKSFDGKEVISQLDLTINNGEFLTLLGPSGCGKTTVLRLIAGLETVDAGHIMLDNQDITHVPAENRYVNTVFQSYALFPHMTVFENVAFGLRMQKTPAAEIAPRVTDALRMVQLEEFAQRKPHQLSGGQQQRVAIARAVVNKPRLLLLDESLSALDYKLRKQMQNELKALQRKLGITFVFVTHDQEEALTMSDRIVVMRNGVIEQDGTPREIYEEPKNLFVAGFIGEINRFDATVIERLDEQRVRASVEGRECNIYVNFAVEPGQKLNVLLRPEDLRVEEINDDNHIEGLIGYVRERNYKGMTLESVVELENGKMVMVSEFFNEDDPDFDHSLDQKMAISWVESWEVVLADEEHK.

One can recognise an ABC transporter domain in the interval 18 to 248 (VLLSGISKSF…PKNLFVAGFI (231 aa)). Residue 50-57 (GPSGCGKT) coordinates ATP.

This sequence belongs to the ABC transporter superfamily. Spermidine/putrescine importer (TC 3.A.1.11.1) family. In terms of assembly, the complex is composed of two ATP-binding proteins (PotA), two transmembrane proteins (PotB and PotC) and a solute-binding protein (PotD).

It localises to the cell inner membrane. The catalysed reaction is ATP + H2O + polyamine-[polyamine-binding protein]Side 1 = ADP + phosphate + polyamineSide 2 + [polyamine-binding protein]Side 1.. In terms of biological role, part of the ABC transporter complex PotABCD involved in spermidine/putrescine import. Responsible for energy coupling to the transport system. In Salmonella paratyphi A (strain ATCC 9150 / SARB42), this protein is Spermidine/putrescine import ATP-binding protein PotA.